The primary structure comprises 555 residues: MNDTKDNKVYSSARHSKYWQKLKAAAESKWSLAALFAQDNTRTQRFSAQSGALYMDYSKQCLDDTVLESLLNLANSCELSARIQALLQGAMVNTSEERAALHTALRLPTTANLQLDNQDVVADVHQSLGQVERLSERVRSGTWRGFSGKAITDVVNIGVGGSDLGPLMATTALDEWADTCVEVHFVSNMDGTQLDNLLKHLNPETTLFIISSKSFGTIDTLSNAKTALSWLLATAKLRAGTEDSVLRRHFIGISANSEKMSAWGIHPEHQLQLWEWVGGRFSLWSAIGLAIAIRIGMSGFKELLAGAHSMDEHFAQADFAENLPVLLGLIAVWNSTFLQVNAHTVLPYDGRLSYLPSYLTQLEMESNGKSVTQHGDRIDYDTCPILWGEIGSNAQHAFYQLLHQGTQQVSCDFIACVRRYSDKAKNTPLQQQHELSLANCLAQSRVLAFGNAAIAETDSQIACDADKYKYYRGNQPSTTLLIDELTPHSLGALIALYEHKVYVMASIWDINPFDQWGVEMGKQMAESVHDAMQQEGNAPFDTSTNQLLKHIKQLS.

The active-site Proton donor is E365. Catalysis depends on residues H396 and K522.

It belongs to the GPI family.

It is found in the cytoplasm. The enzyme catalyses alpha-D-glucose 6-phosphate = beta-D-fructose 6-phosphate. Its pathway is carbohydrate biosynthesis; gluconeogenesis. It functions in the pathway carbohydrate degradation; glycolysis; D-glyceraldehyde 3-phosphate and glycerone phosphate from D-glucose: step 2/4. Its function is as follows. Catalyzes the reversible isomerization of glucose-6-phosphate to fructose-6-phosphate. This chain is Glucose-6-phosphate isomerase, found in Psychrobacter cryohalolentis (strain ATCC BAA-1226 / DSM 17306 / VKM B-2378 / K5).